Here is a 259-residue protein sequence, read N- to C-terminus: NAP1-related protein 1 (259 aa).

A compositionally biased stretch (basic and acidic residues) spans 1–15 (MAAAEQKGKKPRTDG). The tract at residues 1–20 (MAAAEQKGKKPRTDGAEAEP) is disordered. Residues 21 to 62 (VDAALLQSIEKLQEIQDEIEKVNEEACDKVLELEQKYNEVRR) are a coiled coil. Residues 228 to 259 (ELLDDDDEVSDDDDEEEDDEDQGEGEEDGEEN) are disordered.

Belongs to the nucleosome assembly protein (NAP) family.

The protein resides in the nucleus. It is found in the cytoplasm. Acts as a histone H2A/H2B chaperone in nucleosome assembly. This chain is NAP1-related protein 1, found in Oryza sativa subsp. indica (Rice).